A 128-amino-acid chain; its full sequence is Myelin basic protein (128 aa).

Disordered regions lie at residues A1 to T24 and T82 to R128. 2 stretches are compositionally biased toward basic and acidic residues: residues G11–A23 and K96–G107.

Belongs to the myelin basic protein family. The N-terminus is blocked.

The protein localises to the myelin membrane. In terms of biological role, this protein may function to maintain proper structure of myelin. The chain is Myelin basic protein (MBP) from Carcharhinus obscurus (Dusky shark).